A 257-amino-acid chain; its full sequence is MLERFSKWRQAFTDTEDEEPTSIDPQNIPRHVAIIMDGNGRWAKEKGLPRIAGHREGMKTVNKIVRAANTLNIEILTLYAFSTENWKRPKAEVEFLLKLPERYLKSELPTLIEENVQVRLMGSKDGLPSYTLHAVDEAIEKTKHNTGLILNFALNYGSRFELTSAMQQIAKKVQQGELMPEHITEETISAHLMSNHLRDPDLLIRTSGELRLSNFMLWQIAYSEFLFMDVYWPNFTEHHFYKAVLTYQNRGRRYGGV.

Residue Asp37 is part of the active site. A Mg(2+)-binding site is contributed by Asp37. Residues 38-41, Trp42, Arg50, His54, and 82-84 each bind substrate; these read GNGR and STE. Residue Asn85 is the Proton acceptor of the active site. Residues Trp86, Arg88, Arg205, and 211-213 contribute to the substrate site; that span reads RLS. Residue Glu224 coordinates Mg(2+).

This sequence belongs to the UPP synthase family. In terms of assembly, homodimer. It depends on Mg(2+) as a cofactor.

In terms of biological role, catalyzes the condensation of isopentenyl diphosphate (IPP) with allylic pyrophosphates generating different type of terpenoids. The chain is Isoprenyl transferase from Shouchella clausii (strain KSM-K16) (Alkalihalobacillus clausii).